A 173-amino-acid polypeptide reads, in one-letter code: MATSAKESAVAELTDLFRESSAAVLTEYRGLTVTELKQLRDSIRQDATYAVAKNTLAEIAAKDAGLEGLEAHLSGPTAIAFVTGDPVNVAKALRDFAKDHEKLVLKGGYMDGQPLDEAGIKKLADLESREVLLAKFAGAMKGSMSKAAALFQAPLSKTVRTVEALRAAQGEAA.

The protein belongs to the universal ribosomal protein uL10 family. As to quaternary structure, part of the ribosomal stalk of the 50S ribosomal subunit. The N-terminus interacts with L11 and the large rRNA to form the base of the stalk. The C-terminus forms an elongated spine to which L12 dimers bind in a sequential fashion forming a multimeric L10(L12)X complex.

Its function is as follows. Forms part of the ribosomal stalk, playing a central role in the interaction of the ribosome with GTP-bound translation factors. The protein is Large ribosomal subunit protein uL10 of Micrococcus luteus (strain ATCC 4698 / DSM 20030 / JCM 1464 / CCM 169 / CCUG 5858 / IAM 1056 / NBRC 3333 / NCIMB 9278 / NCTC 2665 / VKM Ac-2230) (Micrococcus lysodeikticus).